The primary structure comprises 530 residues: MGIKKMFQKKEPTEQEIREELSRVGISTRSNNTRQEKFGAFKNYAQERANMKPQLGPVGGNPYANINPGTNNNNNNPYANDNGNNSTGNPNNNSNSNNGGNPYGGGVTNNNPYGGSGGNGRGSSPSPYAPTTSTTTRSSNPYGNNNGSRSSQNTSSPYAKSTNNSSYSNSPYSGSTVNNGNRGGHSNNSNSSAGGNPYAAGGRSSQSQNSRDNVYTAPATRTSTRQTQGYGGGDTDSTLDLNAIPSHQMFDNKKPIKRNQQSSQQPANDYNLDLNDEYGEEEDLNLDISEVPEEQQQINSEDEEVEAIKQDIKFVKQESVQSTRNTLRMAQEADASGTNTLGMLGSQSERLYNAEQNLLLAETQTQIADEKVKELKRLNRSIFIPANGNPFNKKSRLRQQEEKIKNQKLQEKYIRENNRQEMFASEQRIKQGITNNSTNNDVYNKYQDEKNLSAAKRYQFENDSEDDDMEKEIASNLNQIDQYAKKLKGLANTMGTEVDNQNTRLKKIEESADKLDINVHMNTTRLNNIR.

The tract at residues 1-274 (MGIKKMFQKK…QPANDYNLDL (274 aa)) is disordered. The segment covering 8–22 (QKKEPTEQEIREELS) has biased composition (basic and acidic residues). Low complexity-rich tracts occupy residues 61–100 (NPYA…NNGG) and 122–141 (GSSP…SSNP). Residues 142-160 (YGNNNGSRSSQNTSSPYAK) are compositionally biased toward polar residues. Low complexity predominate over residues 161–202 (STNNSSYSNSPYSGSTVNNGNRGGHSNNSNSSAGGNPYAAGG). Composition is skewed to polar residues over residues 203 to 228 (RSSQ…RQTQ) and 258 to 268 (RNQQSSQQPAN). T-SNARE coiled-coil homology domains lie at 313–375 (KFVK…VKEL) and 467–529 (DDME…LNNI).

Belongs to the SNAP-25 family.

The protein localises to the membrane. In terms of biological role, late secretory t-SNARE protein required for secretion and proper cytokinesis. Plays an important role in the secretion of virulence-associated extracellular enzymes and vesicle-mediated polarized hyphal growth. The polypeptide is Protein transport protein SEC9 (SEC9) (Candida albicans (strain SC5314 / ATCC MYA-2876) (Yeast)).